The primary structure comprises 234 residues: Isoprenyl transferase (234 aa).

Residue Asp-13 is part of the active site. Asp-13 lines the Mg(2+) pocket. Substrate is bound by residues Gly-14–Arg-17, Trp-18, Arg-26, His-30, and Ser-58–Glu-60. The Proton acceptor role is filled by Asn-61. Substrate-binding positions include Trp-62, Arg-64, Arg-180, and Arg-186–Ser-188. Glu-199 is a binding site for Mg(2+).

Belongs to the UPP synthase family. Homodimer. The cofactor is Mg(2+).

Its function is as follows. Catalyzes the condensation of isopentenyl diphosphate (IPP) with allylic pyrophosphates generating different type of terpenoids. In Helicobacter pylori (strain J99 / ATCC 700824) (Campylobacter pylori J99), this protein is Isoprenyl transferase.